The sequence spans 304 residues: Mycothiol acetyltransferase (304 aa).

Residue E36 coordinates 1D-myo-inositol 2-(L-cysteinylamino)-2-deoxy-alpha-D-glucopyranoside. 73-75 (LFV) contacts acetyl-CoA. The 160-residue stretch at 145 to 304 (LEIQTYTESV…EEHCVWAKSD (160 aa)) folds into the N-acetyltransferase domain. Positions 179, 225, and 236 each coordinate 1D-myo-inositol 2-(L-cysteinylamino)-2-deoxy-alpha-D-glucopyranoside. Acetyl-CoA is bound at residue 240–242 (VGL). 1D-myo-inositol 2-(L-cysteinylamino)-2-deoxy-alpha-D-glucopyranoside is bound at residue Y274. Position 279–284 (279–284 (NDPAVK)) interacts with acetyl-CoA.

Belongs to the acetyltransferase family. MshD subfamily. As to quaternary structure, monomer.

The catalysed reaction is 1D-myo-inositol 2-(L-cysteinylamino)-2-deoxy-alpha-D-glucopyranoside + acetyl-CoA = mycothiol + CoA + H(+). Its function is as follows. Catalyzes the transfer of acetyl from acetyl-CoA to desacetylmycothiol (Cys-GlcN-Ins) to form mycothiol. This is Mycothiol acetyltransferase from Corynebacterium aurimucosum (strain ATCC 700975 / DSM 44827 / CIP 107346 / CN-1) (Corynebacterium nigricans).